The sequence spans 177 residues: Large ribosomal subunit protein uL6 (177 aa).

Belongs to the universal ribosomal protein uL6 family. As to quaternary structure, part of the 50S ribosomal subunit.

Functionally, this protein binds to the 23S rRNA, and is important in its secondary structure. It is located near the subunit interface in the base of the L7/L12 stalk, and near the tRNA binding site of the peptidyltransferase center. The protein is Large ribosomal subunit protein uL6 of Ruegeria pomeroyi (strain ATCC 700808 / DSM 15171 / DSS-3) (Silicibacter pomeroyi).